The primary structure comprises 286 residues: Ribose-phosphate pyrophosphokinase (286 aa).

ATP is bound by residues 34 to 36 (DGE) and 91 to 92 (RQ). Residues H124 and D161 each coordinate Mg(2+). K184 is a catalytic residue. D-ribose 5-phosphate contacts are provided by residues R186, D210, and 214–218 (STGGT).

Belongs to the ribose-phosphate pyrophosphokinase family. Class III (archaeal) subfamily. Mg(2+) serves as cofactor.

Its subcellular location is the cytoplasm. It carries out the reaction D-ribose 5-phosphate + ATP = 5-phospho-alpha-D-ribose 1-diphosphate + AMP + H(+). It functions in the pathway metabolic intermediate biosynthesis; 5-phospho-alpha-D-ribose 1-diphosphate biosynthesis; 5-phospho-alpha-D-ribose 1-diphosphate from D-ribose 5-phosphate (route I): step 1/1. Involved in the biosynthesis of the central metabolite phospho-alpha-D-ribosyl-1-pyrophosphate (PRPP) via the transfer of pyrophosphoryl group from ATP to 1-hydroxyl of ribose-5-phosphate (Rib-5-P). This Thermoplasma acidophilum (strain ATCC 25905 / DSM 1728 / JCM 9062 / NBRC 15155 / AMRC-C165) protein is Ribose-phosphate pyrophosphokinase.